Reading from the N-terminus, the 588-residue chain is Aspartate--tRNA ligase (588 aa).

E177 is a binding site for L-aspartate. The aspartate stretch occupies residues 201–204; the sequence is QLFK. Residue R223 participates in L-aspartate binding. Residues 223–225 and Q232 each bind ATP; that span reads RDE. H451 lines the L-aspartate pocket. Residue E485 coordinates ATP. Residue R492 participates in L-aspartate binding. 537–540 contributes to the ATP binding site; it reads GLDR.

Belongs to the class-II aminoacyl-tRNA synthetase family. Type 1 subfamily. As to quaternary structure, homodimer.

It is found in the cytoplasm. The enzyme catalyses tRNA(Asp) + L-aspartate + ATP = L-aspartyl-tRNA(Asp) + AMP + diphosphate. Its function is as follows. Catalyzes the attachment of L-aspartate to tRNA(Asp) in a two-step reaction: L-aspartate is first activated by ATP to form Asp-AMP and then transferred to the acceptor end of tRNA(Asp). In Staphylococcus aureus (strain Newman), this protein is Aspartate--tRNA ligase.